The following is a 697-amino-acid chain: MLIKSLVQKNQVYFTNNSLDEKNICDLSKLKINQPIVHFEHGVGRYQGLTTVTTRNIKTECVVINYAQNSKLYVPITYLYLISRYIGTSKKDIPLHRLGNDLWNKEKKKANEKAYDSAAILLNIYSHRISQKGFSFKKHHTKYKIFCERFPFTLTPDQDSAINSVLSDMYKSTPMDRLVCGDVGFGKTEVAMRATFLAVCNQKQVAILVPTTLLAQQHFNNFTLRFKYWSTKIEILSRFQSETKCNEIINNVNIGNVHVLIGTHKILLKNLKWKNLGLLIVDEEHRFGVHHKEQIKLISNNIDVLTLTATPIPRTLNMAFVGIRDLSIIATPPKQRLIVKTFVREFSYTVIRKAILREILRGGQVYYIYNNVNKIERKKIELKKLVPEANIRIGHGQLRSTDLESIMNDFYHKRFNVLVCSTIIETGIDIPNVNTIIIENANNFGLAQLHQLRGRVGRSQHQAYAWLLVPSLKDIKSDAKKRIDAITSIESFGSCFELANRDLEIRGIGEILGNNQSGHITKIGFSLYMKLLMNAVRNIKNGYYKPLNDIINTYPKIELNVSNLLPDSYIKKVNHRLFFYNKIATSNNFLDLEKIRLTLCKNFGNLPNSGDYLIKIAKIRLISKKIGVKKIKSDVKGGYIEFFEDSKINIQNLLKEFKKEKNCWKFDTSNRLRFSKNFKNNSERIDWILNMLININN.

One can recognise a Helicase ATP-binding domain in the interval 168–329; it reads DMYKSTPMDR…FVGIRDLSII (162 aa). 181–188 serves as a coordination point for ATP; it reads GDVGFGKT. The DEEH box signature appears at 282–285; the sequence is DEEH. In terms of domain architecture, Helicase C-terminal spans 350–504; that stretch reads VIRKAILREI…CFELANRDLE (155 aa).

This sequence in the N-terminal section; belongs to the UvrB family. In the C-terminal section; belongs to the helicase family. RecG subfamily.

The protein localises to the cytoplasm. Functionally, couples transcription and DNA repair by recognizing RNA polymerase (RNAP) stalled at DNA lesions. Mediates ATP-dependent release of RNAP and its truncated transcript from the DNA, and recruitment of nucleotide excision repair machinery to the damaged site. This is Transcription-repair-coupling factor (mfd) from Buchnera aphidicola subsp. Baizongia pistaciae (strain Bp).